We begin with the raw amino-acid sequence, 324 residues long: Melanoma-associated antigen B16 (324 aa).

Residues M1–H15 are compositionally biased toward basic and acidic residues. 2 disordered regions span residues M1 to T22 and L39 to V108. The segment covering S70–S81 has biased composition (low complexity). The span at E82–S95 shows a compositional bias: acidic residues. The 200-residue stretch at L113–A312 folds into the MAGE domain.

The sequence is that of Melanoma-associated antigen B16 (MAGEB16) from Homo sapiens (Human).